Reading from the N-terminus, the 204-residue chain is uncharacterized protein (204 aa).

His-9 (tele-phosphohistidine intermediate) is an active-site residue. Glu-86 serves as the catalytic Proton donor/acceptor.

The protein belongs to the phosphoglycerate mutase family.

This is an uncharacterized protein from Acanthamoeba polyphaga (Amoeba).